Reading from the N-terminus, the 399-residue chain is Succinate--CoA ligase [ADP-forming] subunit beta (399 aa).

One can recognise an ATP-grasp domain in the interval 9-254; it reads KQVLAKYGVP…EDEEDPMELE (246 aa). ATP-binding positions include Lys46, 53-55, Glu109, Cys112, and Glu117; that span reads GRG. Residues Asn209 and Asp223 each coordinate Mg(2+). Substrate-binding positions include Asn274 and 331 to 333; that span reads GIM.

This sequence belongs to the succinate/malate CoA ligase beta subunit family. As to quaternary structure, heterotetramer of two alpha and two beta subunits. The cofactor is Mg(2+).

The enzyme catalyses succinate + ATP + CoA = succinyl-CoA + ADP + phosphate. It catalyses the reaction GTP + succinate + CoA = succinyl-CoA + GDP + phosphate. Its pathway is carbohydrate metabolism; tricarboxylic acid cycle; succinate from succinyl-CoA (ligase route): step 1/1. Succinyl-CoA synthetase functions in the citric acid cycle (TCA), coupling the hydrolysis of succinyl-CoA to the synthesis of either ATP or GTP and thus represents the only step of substrate-level phosphorylation in the TCA. The beta subunit provides nucleotide specificity of the enzyme and binds the substrate succinate, while the binding sites for coenzyme A and phosphate are found in the alpha subunit. The sequence is that of Succinate--CoA ligase [ADP-forming] subunit beta from Rhodospirillum rubrum (strain ATCC 11170 / ATH 1.1.1 / DSM 467 / LMG 4362 / NCIMB 8255 / S1).